The sequence spans 614 residues: Glutamine--fructose-6-phosphate aminotransferase [isomerizing] (614 aa).

C2 serves as the catalytic Nucleophile; for GATase activity. Residues 2–221 (CGIVGYIGKR…DGEIAVINRG (220 aa)) enclose the Glutamine amidotransferase type-2 domain. 2 SIS domains span residues 291-430 (YKEK…EKGT) and 463-604 (LSKT…VDQP). K609 acts as the For Fru-6P isomerization activity in catalysis.

In terms of assembly, homodimer.

It is found in the cytoplasm. It catalyses the reaction D-fructose 6-phosphate + L-glutamine = D-glucosamine 6-phosphate + L-glutamate. Catalyzes the first step in hexosamine metabolism, converting fructose-6P into glucosamine-6P using glutamine as a nitrogen source. The polypeptide is Glutamine--fructose-6-phosphate aminotransferase [isomerizing] (Bacteroides thetaiotaomicron (strain ATCC 29148 / DSM 2079 / JCM 5827 / CCUG 10774 / NCTC 10582 / VPI-5482 / E50)).